A 101-amino-acid chain; its full sequence is MQVLVRDNNVDQALKALKKKMQREGIFREMKLRGHYEKPSEKKAREKAEAVRRARKLARKKLQREGLLPMKPKPAFGAERGRPGAGGPGAGGPGAGPRGPR.

Basic and acidic residues predominate over residues 36–52 (YEKPSEKKAREKAEAVR). The interval 36–101 (YEKPSEKKAR…GPGAGPRGPR (66 aa)) is disordered. Residues 53–62 (RARKLARKKL) are compositionally biased toward basic residues. Residues 83-101 (PGAGGPGAGGPGAGPRGPR) are compositionally biased toward gly residues.

The protein belongs to the bacterial ribosomal protein bS21 family.

The sequence is that of Small ribosomal subunit protein bS21 from Rhodopseudomonas palustris (strain HaA2).